Here is a 90-residue protein sequence, read N- to C-terminus: DNA-directed RNA polymerase subunit omega (90 aa).

It belongs to the RNA polymerase subunit omega family. The RNAP catalytic core consists of 2 alpha, 1 beta, 1 beta' and 1 omega subunit. When a sigma factor is associated with the core the holoenzyme is formed, which can initiate transcription.

It carries out the reaction RNA(n) + a ribonucleoside 5'-triphosphate = RNA(n+1) + diphosphate. In terms of biological role, promotes RNA polymerase assembly. Latches the N- and C-terminal regions of the beta' subunit thereby facilitating its interaction with the beta and alpha subunits. This chain is DNA-directed RNA polymerase subunit omega, found in Histophilus somni (strain 129Pt) (Haemophilus somnus).